The sequence spans 250 residues: Sulfate transporter CysZ (250 aa).

The next 4 membrane-spanning stretches (helical) occupy residues 26–46 (LFVL…IYLA), 71–91 (ILWP…FTML), 150–170 (LFIL…WLLF), and 211–231 (IVYL…AAVA).

This sequence belongs to the CysZ family.

Its subcellular location is the cell inner membrane. High affinity, high specificity proton-dependent sulfate transporter, which mediates sulfate uptake. Provides the sulfur source for the cysteine synthesis pathway. The protein is Sulfate transporter CysZ of Pseudomonas fluorescens (strain Pf0-1).